The primary structure comprises 327 residues: Transaldolase (327 aa).

The active-site Schiff-base intermediate with substrate is lysine 132.

This sequence belongs to the transaldolase family. Type 1 subfamily. In terms of assembly, homodimer.

The protein localises to the cytoplasm. The catalysed reaction is D-sedoheptulose 7-phosphate + D-glyceraldehyde 3-phosphate = D-erythrose 4-phosphate + beta-D-fructose 6-phosphate. It functions in the pathway carbohydrate degradation; pentose phosphate pathway; D-glyceraldehyde 3-phosphate and beta-D-fructose 6-phosphate from D-ribose 5-phosphate and D-xylulose 5-phosphate (non-oxidative stage): step 2/3. Functionally, transaldolase is important for the balance of metabolites in the pentose-phosphate pathway. The polypeptide is Transaldolase (Chlamydia caviae (strain ATCC VR-813 / DSM 19441 / 03DC25 / GPIC) (Chlamydophila caviae)).